The primary structure comprises 285 residues: Acetylglutamate kinase (285 aa).

Residues 64–65, arginine 86, and asparagine 179 each bind substrate; that span reads GG.

It belongs to the acetylglutamate kinase family. ArgB subfamily.

The protein resides in the plastid. It localises to the chloroplast. It carries out the reaction N-acetyl-L-glutamate + ATP = N-acetyl-L-glutamyl 5-phosphate + ADP. The protein operates within amino-acid biosynthesis; L-arginine biosynthesis; N(2)-acetyl-L-ornithine from L-glutamate: step 2/4. In terms of biological role, catalyzes the ATP-dependent phosphorylation of N-acetyl-L-glutamate. This Pyropia yezoensis (Susabi-nori) protein is Acetylglutamate kinase.